A 236-amino-acid polypeptide reads, in one-letter code: Leucyl/phenylalanyl-tRNA--protein transferase (236 aa).

Belongs to the L/F-transferase family.

The protein resides in the cytoplasm. It catalyses the reaction N-terminal L-lysyl-[protein] + L-leucyl-tRNA(Leu) = N-terminal L-leucyl-L-lysyl-[protein] + tRNA(Leu) + H(+). The catalysed reaction is N-terminal L-arginyl-[protein] + L-leucyl-tRNA(Leu) = N-terminal L-leucyl-L-arginyl-[protein] + tRNA(Leu) + H(+). It carries out the reaction L-phenylalanyl-tRNA(Phe) + an N-terminal L-alpha-aminoacyl-[protein] = an N-terminal L-phenylalanyl-L-alpha-aminoacyl-[protein] + tRNA(Phe). Functions in the N-end rule pathway of protein degradation where it conjugates Leu, Phe and, less efficiently, Met from aminoacyl-tRNAs to the N-termini of proteins containing an N-terminal arginine or lysine. This is Leucyl/phenylalanyl-tRNA--protein transferase from Shewanella oneidensis (strain ATCC 700550 / JCM 31522 / CIP 106686 / LMG 19005 / NCIMB 14063 / MR-1).